A 375-amino-acid polypeptide reads, in one-letter code: DNA replication and repair protein RecF (375 aa).

30–37 is a binding site for ATP; that stretch reads GENAQGKT.

This sequence belongs to the RecF family.

It localises to the cytoplasm. Functionally, the RecF protein is involved in DNA metabolism; it is required for DNA replication and normal SOS inducibility. RecF binds preferentially to single-stranded, linear DNA. It also seems to bind ATP. This is DNA replication and repair protein RecF from Bacillus cereus (strain ZK / E33L).